Consider the following 536-residue polypeptide: Protein GvpD1 (536 aa).

39–46 (GAPGTGKT) is an ATP binding site. The disordered stretch occupies residues 352 to 413 (GPSDSADRYD…SDQPHPIDED (62 aa)). Residues 363 to 372 (PDSTESFSEM) are compositionally biased toward polar residues. Low complexity predominate over residues 373-385 (ATTTPPDDAPTAT). Residues 386–396 (HETDGADDGSR) show a composition bias toward basic and acidic residues.

It belongs to the gas vesicle GvpD family. As to quaternary structure, interacts with GvpE.

The protein localises to the cytoplasm. Causes a decrease in the amount of GvpE protein. The 5'-region of its promoter or mRNA has a repressive function on downstream genes. Gas vesicles are hollow, gas filled proteinaceous nanostructures found in several microbial planktonic microorganisms. They allow positioning of halobacteria at the optimal depth for growth in the poorly aerated, shallow brine pools of their habitat. In terms of biological role, expression of a 9.5 kb p-vac DNA fragment containing 2 divergently transcribed regions (gvpD-gvpE-gvpF-gvpG-gvpH-gvpI-gvpJ-gvpK-gvpL-gvpM and gvpA-gvpC-gvpN-gvpO) allows H.volcanii to produce gas vesicles. A similar region restores gas vesicle production in H.halobium without the p-vac locus, but it still has the c-vac locus. This is Protein GvpD1 (gvpD11) from Halobacterium salinarum (strain ATCC 700922 / JCM 11081 / NRC-1) (Halobacterium halobium).